Here is a 141-residue protein sequence, read N- to C-terminus: MRAVVQRVTRARVTVEGEVVGAVDGPGLLVLLGVTHDDGPAQVELIARKVAQLRILRGERAAADVGAPVLLVSQFTLYADTRKGRRPTWNAAAPGDVAQPLVDAVADALRGHGLPVETGRFGADMAVELVNDGPTTILLDA.

The short motif at 133 to 134 is the Gly-cisPro motif, important for rejection of L-amino acids element; the sequence is GP.

It belongs to the DTD family. Homodimer.

It is found in the cytoplasm. The catalysed reaction is glycyl-tRNA(Ala) + H2O = tRNA(Ala) + glycine + H(+). It carries out the reaction a D-aminoacyl-tRNA + H2O = a tRNA + a D-alpha-amino acid + H(+). An aminoacyl-tRNA editing enzyme that deacylates mischarged D-aminoacyl-tRNAs. Also deacylates mischarged glycyl-tRNA(Ala), protecting cells against glycine mischarging by AlaRS. Acts via tRNA-based rather than protein-based catalysis; rejects L-amino acids rather than detecting D-amino acids in the active site. By recycling D-aminoacyl-tRNA to D-amino acids and free tRNA molecules, this enzyme counteracts the toxicity associated with the formation of D-aminoacyl-tRNA entities in vivo and helps enforce protein L-homochirality. The polypeptide is D-aminoacyl-tRNA deacylase (Kineococcus radiotolerans (strain ATCC BAA-149 / DSM 14245 / SRS30216)).